A 356-amino-acid polypeptide reads, in one-letter code: Phosphoribosylformylglycinamidine cyclo-ligase (356 aa).

This sequence belongs to the AIR synthase family.

The protein resides in the cytoplasm. The catalysed reaction is 2-formamido-N(1)-(5-O-phospho-beta-D-ribosyl)acetamidine + ATP = 5-amino-1-(5-phospho-beta-D-ribosyl)imidazole + ADP + phosphate + H(+). It participates in purine metabolism; IMP biosynthesis via de novo pathway; 5-amino-1-(5-phospho-D-ribosyl)imidazole from N(2)-formyl-N(1)-(5-phospho-D-ribosyl)glycinamide: step 2/2. This is Phosphoribosylformylglycinamidine cyclo-ligase from Acinetobacter baumannii (strain AB307-0294).